Consider the following 248-residue polypeptide: 3-deoxy-manno-octulosonate cytidylyltransferase (248 aa).

Belongs to the KdsB family.

The protein localises to the cytoplasm. The enzyme catalyses 3-deoxy-alpha-D-manno-oct-2-ulosonate + CTP = CMP-3-deoxy-beta-D-manno-octulosonate + diphosphate. The protein operates within nucleotide-sugar biosynthesis; CMP-3-deoxy-D-manno-octulosonate biosynthesis; CMP-3-deoxy-D-manno-octulosonate from 3-deoxy-D-manno-octulosonate and CTP: step 1/1. It participates in bacterial outer membrane biogenesis; lipopolysaccharide biosynthesis. In terms of biological role, activates KDO (a required 8-carbon sugar) for incorporation into bacterial lipopolysaccharide in Gram-negative bacteria. The polypeptide is 3-deoxy-manno-octulosonate cytidylyltransferase (Escherichia coli O139:H28 (strain E24377A / ETEC)).